We begin with the raw amino-acid sequence, 346 residues long: MKMSFRWFGPTDPIPLEYIRQIPGMTHIVSAIYDEPVGEVWPLDKIQALKSTIEAAGLQFKVVESVPVHEDIKLGKPTRERLIANYQQTIRNLAAAGIEVICYNFMPVFDWTRTELAKKLDDGSTCLAFSTREVEQIDVSQGIALPGWDSSYAHAELQSLLAEYRGIDEGRLWEHLEHFLRAIIPVAQECGIKMAIHPDDPPRPIFGLPRIVKNRDDLARILAIVDTPANGLTLCSGSLGAGPQNNVEALVREFGGMGRIHFAHIRNVKITPEGDFEETAHLSSCGSLDIAAIVKAYHDVGFQGYYRPDHGRMIWGETGKPGYGLYDRALGAVYINGMWEAMEKTA.

This sequence belongs to the mannonate dehydratase family. Requires Fe(2+) as cofactor. It depends on Mn(2+) as a cofactor.

The catalysed reaction is D-mannonate = 2-dehydro-3-deoxy-D-gluconate + H2O. Its pathway is carbohydrate metabolism; pentose and glucuronate interconversion. Catalyzes the dehydration of D-mannonate. The protein is Mannonate dehydratase of Cupriavidus taiwanensis (strain DSM 17343 / BCRC 17206 / CCUG 44338 / CIP 107171 / LMG 19424 / R1) (Ralstonia taiwanensis (strain LMG 19424)).